Here is a 426-residue protein sequence, read N- to C-terminus: Glucose-6-phosphate isomerase (426 aa).

E282 functions as the Proton donor in the catalytic mechanism. Active-site residues include H303 and K417.

Belongs to the GPI family.

The protein resides in the cytoplasm. It carries out the reaction alpha-D-glucose 6-phosphate = beta-D-fructose 6-phosphate. It functions in the pathway carbohydrate biosynthesis; gluconeogenesis. The protein operates within carbohydrate degradation; glycolysis; D-glyceraldehyde 3-phosphate and glycerone phosphate from D-glucose: step 2/4. Functionally, catalyzes the reversible isomerization of glucose-6-phosphate to fructose-6-phosphate. This Aster yellows witches'-broom phytoplasma (strain AYWB) protein is Glucose-6-phosphate isomerase.